The primary structure comprises 426 residues: Probable imidazolonepropionase (426 aa).

Residues Tyr158 and His192 each contribute to the 4-imidazolone-5-propanoate site. N-formimidoyl-L-glutamate is bound at residue Tyr158. His260 serves as a coordination point for Fe(3+). His260 is a binding site for Zn(2+). Residue Glu263 coordinates 4-imidazolone-5-propanoate. Position 334 (Asp334) interacts with Fe(3+). Asp334 lines the Zn(2+) pocket. An N-formimidoyl-L-glutamate-binding site is contributed by Asn336.

The protein belongs to the metallo-dependent hydrolases superfamily. HutI family. Zn(2+) serves as cofactor. The cofactor is Fe(3+).

It catalyses the reaction 4-imidazolone-5-propanoate + H2O = N-formimidoyl-L-glutamate. It participates in amino-acid degradation; L-histidine degradation into L-glutamate; N-formimidoyl-L-glutamate from L-histidine: step 3/3. The protein is Probable imidazolonepropionase (amdhd1) of Dictyostelium discoideum (Social amoeba).